A 743-amino-acid chain; its full sequence is MASLTLPALALALSNPGAVRLRAAAFRCWALRRRGWAAAGALASPNSVLSEHAFKRLQLGSDDEDGEGPYGSDADEGFEAGEGDNEELAIARLGLPDELVATLEKRGITHLFPIQRAVLIPALEGRDLIARAKTGTGKTLAFGIPMIKQLIEQDDGRITRRGRTPRVLVLAPTRELAKQVEKEIKESAPKLGTVCVYGGVSYNVQQNALSRGVDVVVGTPGRIIDLINGGSLQLGEVQYLVLDEADQMLAVGFEEDVETILQQLPAGRQSMLFSATMPSWVKKLSRRYLNNPLTIDLVGDQDEKLAEGIKLYAIPLTTTSKRTVLSDLITVYAKGGKTIVFTRTKKDADEVSLALTNSIASEALHGDISQHQRERTLNGFRQGKFTVLVATDVAARGLDIPNVDLIIHYELPNDPETFVHRSGRTGRAGKAGTAILMFTSSQKRTVKSLERDVGCNFEFISPPSIEEVLESSAEHVIATLRGVHPESTKYFLGAAEKLTEELGPHALASALAHLSGFSQPPSSRSLISHEQGWVTLQLTREQGFGRGFFSPRSVTGFLSDVCSAAADEVGKIYLTADENVQGAVFDLPEEIAKDLLTMELPPGNTLTKISKLPALQDDGPATDSYGRFSNDRGSRNNRRSRGGGASRGRGGWDTDGEDRFRRGGRSLRSDNDSWSDDDWSGGGRKSNRSSSFGSRSSSYSSRGSPSFGGRSSSFGGRESNRSFSGACFNCGESGHRATDCPNK.

The N-terminal 37 residues, 1-37 (MASLTLPALALALSNPGAVRLRAAAFRCWALRRRGWA), are a transit peptide targeting the chloroplast. Positions 60 to 79 (GSDDEDGEGPYGSDADEGFE) are disordered. Residues 61-79 (SDDEDGEGPYGSDADEGFE) show a composition bias toward acidic residues. A Q motif motif is present at residues 88 to 116 (LAIARLGLPDELVATLEKRGITHLFPIQR). Residues 119 to 295 (LIPALEGRDL…RRYLNNPLTI (177 aa)) enclose the Helicase ATP-binding domain. ATP is bound at residue 132 to 139 (AKTGTGKT). The DEAD box motif lies at 243–246 (DEAD). One can recognise a Helicase C-terminal domain in the interval 324-469 (VLSDLITVYA…ISPPSIEEVL (146 aa)). The tract at residues 606–719 (LTKISKLPAL…RSSSFGGRES (114 aa)) is disordered. Over residues 642–653 (GGGASRGRGGWD) the composition is skewed to gly residues. Basic and acidic residues predominate over residues 657–671 (EDRFRRGGRSLRSDN). Low complexity predominate over residues 688-719 (RSSSFGSRSSSYSSRGSPSFGGRSSSFGGRES). The segment at 725–742 (GACFNCGESGHRATDCPN) adopts a CCHC-type zinc-finger fold.

It belongs to the DEAD box helicase family. DDX21/DDX50 subfamily.

It is found in the plastid. It localises to the chloroplast stroma. It catalyses the reaction ATP + H2O = ADP + phosphate + H(+). In terms of biological role, nuclear genome-encoded factor involved in ribosome biogenesis in chloroplasts. Binds specific group II introns in chloroplasts and facilitates their splicing. Is required for rRNA maturation in plastids and may contribute to the assembly of the large (50S) ribosomal subunit. Required for normal development of chloroplasts. This chain is DEAD-box ATP-dependent RNA helicase 3B, chloroplastic, found in Zea mays (Maize).